Here is a 507-residue protein sequence, read N- to C-terminus: Glycine, alanine and asparagine-rich protein (507 aa).

The first 17 residues, 1-17, serve as a signal peptide directing secretion; sequence MLRVPLLVLCLALSVGA. A coiled-coil region spans residues 158–185; the sequence is SAQALASATAELQAAQDAYDQASAYAEA. Residues 462-498 are compositionally biased toward gly residues; that stretch reads GNGNGGNGRNGNGGNGRNGNGGNGGNGNGRNGRGGRY. Positions 462–507 are disordered; the sequence is GNGNGGNGRNGNGGNGRNGNGGNGGNGNGRNGRGGRYYYGSSDYYY.

In terms of tissue distribution, component of the acid-soluble and acid-insoluble organic matrix of calcified shell layers (at protein level).

It localises to the secreted. The chain is Glycine, alanine and asparagine-rich protein from Haliotis asinina (Donkey's ear abalone).